Consider the following 99-residue polypeptide: Integration host factor subunit alpha (99 aa).

The interval 49–71 (FGNFDLRDKNQRPGRNPKTGEDI) is disordered.

It belongs to the bacterial histone-like protein family. In terms of assembly, heterodimer of an alpha and a beta chain.

Its function is as follows. This protein is one of the two subunits of integration host factor, a specific DNA-binding protein that functions in genetic recombination as well as in transcriptional and translational control. The chain is Integration host factor subunit alpha from Shewanella denitrificans (strain OS217 / ATCC BAA-1090 / DSM 15013).